Consider the following 533-residue polypeptide: Drimenyl diphosphate synthase (533 aa).

Arginine 132, lysine 133, glutamine 163, and tryptophan 165 together coordinate (2E,6E)-farnesyl diphosphate. Glutamate 169 serves as a coordination point for Mg(2+). PFTB repeat units follow at residues 274–316, 324–366, 372–415, 425–466, and 474–517; these read VTPM…RRAA, VAEA…AHDP, VDEA…AAHG, AERA…ARGP, and LDRA…FVLL. Catalysis depends on aspartate 303, which acts as the Proton donor. Arginine 501 contacts (2E,6E)-farnesyl diphosphate.

It belongs to the terpene cyclase/mutase family. Requires Mg(2+) as cofactor. Ni(2+) is required as a cofactor. It depends on Co(2+) as a cofactor.

It carries out the reaction (2E,6E)-farnesyl diphosphate = (5S,9S,10S)-drim-7-en-11-yl diphosphate. Catalyzes the cyclization of farnesyl diphosphate (FPP) to drimenyl diphosphate. Cannot use geranylgeranyl diphosphate (GGPP) as substrate. This chain is Drimenyl diphosphate synthase, found in Streptomyces showdoensis.